A 322-amino-acid chain; its full sequence is Lymphatic vessel endothelial hyaluronic acid receptor 1 (322 aa).

The first 19 residues, 1-19 (MARCFSLVLLLTSIWTTRL), serve as a signal peptide directing secretion. Topologically, residues 20-238 (LVQGSLRAEE…EAAGFGGVPT (219 aa)) are extracellular. The region spanning 40-130 (GITLVSKKAN…SRQFAAYCYN (91 aa)) is the Link domain. Residue asparagine 53 is glycosylated (N-linked (GlcNAc...) asparagine). Disulfide bonds link cysteine 61-cysteine 128 and cysteine 85-cysteine 106. N-linked (GlcNAc...) asparagine glycosylation occurs at asparagine 130. The helical transmembrane segment at 239–259 (ALLVLALLFFGAAAGLGFCYV) threads the bilayer. The Cytoplasmic segment spans residues 260-322 (KRYVKAFPFT…TTVRCLEAEV (63 aa)). Residues 279-309 (ETKVVKEEKANDSNPNEESKKTDKNPEESKS) show a composition bias toward basic and acidic residues. Positions 279–322 (ETKVVKEEKANDSNPNEESKKTDKNPEESKSPSKTTVRCLEAEV) are disordered.

Homodimer; disulfide-linked. Interacts with PDGFB and IGFBP3. Forms a transient ternary complex with PDGFB and PDGFRB in TGN. O-glycosylated. Mainly expressed in endothelial cells lining lymphatic vessels.

The protein localises to the cell membrane. Ligand-specific transporter trafficking between intracellular organelles (TGN) and the plasma membrane. Plays a role in autocrine regulation of cell growth mediated by growth regulators containing cell surface retention sequence binding (CRS). May act as a hyaluronan (HA) transporter, either mediating its uptake for catabolism within lymphatic endothelial cells themselves, or its transport into the lumen of afferent lymphatic vessels for subsequent re-uptake and degradation in lymph nodes. Binds to pericelluar hyaluronan matrices deposited on the surface of leukocytes and facilitates cell adhesion and migration through lymphatic endothelium. The polypeptide is Lymphatic vessel endothelial hyaluronic acid receptor 1 (LYVE1) (Homo sapiens (Human)).